A 1342-amino-acid polypeptide reads, in one-letter code: DNA-directed RNA polymerase subunit beta (1342 aa).

The protein belongs to the RNA polymerase beta chain family. The RNAP catalytic core consists of 2 alpha, 1 beta, 1 beta' and 1 omega subunit. When a sigma factor is associated with the core the holoenzyme is formed, which can initiate transcription.

It catalyses the reaction RNA(n) + a ribonucleoside 5'-triphosphate = RNA(n+1) + diphosphate. DNA-dependent RNA polymerase catalyzes the transcription of DNA into RNA using the four ribonucleoside triphosphates as substrates. The sequence is that of DNA-directed RNA polymerase subunit beta from Buchnera aphidicola subsp. Schizaphis graminum (strain Sg).